A 242-amino-acid polypeptide reads, in one-letter code: Probable septum site-determining protein MinC (242 aa).

The protein belongs to the MinC family. In terms of assembly, interacts with MinD and FtsZ.

Functionally, cell division inhibitor that blocks the formation of polar Z ring septums. Rapidly oscillates between the poles of the cell to destabilize FtsZ filaments that have formed before they mature into polar Z rings. Prevents FtsZ polymerization. The polypeptide is Probable septum site-determining protein MinC (Buchnera aphidicola subsp. Schizaphis graminum (strain Sg)).